The sequence spans 64 residues: Ferredoxin-2 (64 aa).

2 consecutive 4Fe-4S ferredoxin-type domains span residues 3-31 (KYLY…MSSA) and 34-64 (YAEV…WREE). Residues C12, C15, C18, and C54 each coordinate [4Fe-4S] cluster.

Homodimer. [4Fe-4S] cluster serves as cofactor.

Ferredoxins are iron-sulfur proteins that transfer electrons in a wide variety of metabolic reactions. The sequence is that of Ferredoxin-2 from Nitratidesulfovibrio vulgaris (strain DSM 19637 / Miyazaki F) (Desulfovibrio vulgaris).